A 217-amino-acid polypeptide reads, in one-letter code: Large ribosomal subunit protein uL3 (217 aa).

The protein belongs to the universal ribosomal protein uL3 family. As to quaternary structure, part of the 50S ribosomal subunit. Forms a cluster with proteins L14 and L19.

In terms of biological role, one of the primary rRNA binding proteins, it binds directly near the 3'-end of the 23S rRNA, where it nucleates assembly of the 50S subunit. The sequence is that of Large ribosomal subunit protein uL3 from Mycobacterium bovis (strain ATCC BAA-935 / AF2122/97).